A 458-amino-acid polypeptide reads, in one-letter code: UDP-N-acetylmuramoylalanine--D-glutamate ligase (458 aa).

124 to 130 (GSDGKTT) provides a ligand contact to ATP.

It belongs to the MurCDEF family.

The protein resides in the cytoplasm. It catalyses the reaction UDP-N-acetyl-alpha-D-muramoyl-L-alanine + D-glutamate + ATP = UDP-N-acetyl-alpha-D-muramoyl-L-alanyl-D-glutamate + ADP + phosphate + H(+). It functions in the pathway cell wall biogenesis; peptidoglycan biosynthesis. Functionally, cell wall formation. Catalyzes the addition of glutamate to the nucleotide precursor UDP-N-acetylmuramoyl-L-alanine (UMA). This Clostridium botulinum (strain Alaska E43 / Type E3) protein is UDP-N-acetylmuramoylalanine--D-glutamate ligase.